A 468-amino-acid chain; its full sequence is uncharacterized protein (468 aa).

2 coiled-coil regions span residues 10-94 and 147-279; these read NEAL…VKEL and FVEL…EASI. A disordered region spans residues 324 to 369; it reads TPRTVDPIPEGTIIKKESSDDAMFSGLKKSKPKKSNKSNNNQADSD. Serine 342 is subject to Phosphoserine. A coiled-coil region spans residues 399–445; the sequence is VEQLKSRIAHFKEQQDSVTKQRIEKAKQEIEKLEAKYNSKEEKTLTE.

The protein resides in the cytoplasm. This is an uncharacterized protein from Schizosaccharomyces pombe (strain 972 / ATCC 24843) (Fission yeast).